The primary structure comprises 204 residues: Peptide deformylase (204 aa).

Fe cation contacts are provided by Cys131 and His174. Glu175 is a catalytic residue. A Fe cation-binding site is contributed by His178.

The protein belongs to the polypeptide deformylase family. Requires Fe(2+) as cofactor.

The enzyme catalyses N-terminal N-formyl-L-methionyl-[peptide] + H2O = N-terminal L-methionyl-[peptide] + formate. Its function is as follows. Removes the formyl group from the N-terminal Met of newly synthesized proteins. Requires at least a dipeptide for an efficient rate of reaction. N-terminal L-methionine is a prerequisite for activity but the enzyme has broad specificity at other positions. The polypeptide is Peptide deformylase (Streptococcus gordonii (strain Challis / ATCC 35105 / BCRC 15272 / CH1 / DL1 / V288)).